Here is a 99-residue protein sequence, read N- to C-terminus: Large ribosomal subunit protein bL28 (99 aa).

It belongs to the bacterial ribosomal protein bL28 family.

This chain is Large ribosomal subunit protein bL28, found in Rhizobium leguminosarum bv. trifolii (strain WSM2304).